A 62-amino-acid polypeptide reads, in one-letter code: Single-pass membrane and coiled-coil domain-containing protein 4 homolog (62 aa).

The interval 1–27 (MRQLPGKAAKETRKMKRERKQQNKEGH) is disordered. The stretch at 9–31 (AKETRKMKRERKQQNKEGHNRVV) forms a coiled coil. The chain crosses the membrane as a helical span at residues 30–50 (VVTVAIPVCLAVFVMLIVYVY).

This sequence belongs to the SMCO4 family.

The protein localises to the membrane. The protein is Single-pass membrane and coiled-coil domain-containing protein 4 homolog of Nematostella vectensis (Starlet sea anemone).